An 862-amino-acid polypeptide reads, in one-letter code: Protein translocase subunit SecA (862 aa).

Residues Gln86, 104–108 (GEGKT), and Asp499 contribute to the ATP site. Residues Cys848, Cys850, Cys859, and His860 each contribute to the Zn(2+) site.

It belongs to the SecA family. Monomer and homodimer. Part of the essential Sec protein translocation apparatus which comprises SecA, SecYEG and auxiliary proteins SecDF-YajC and YidC. Requires Zn(2+) as cofactor.

It localises to the cell inner membrane. Its subcellular location is the cytoplasm. The enzyme catalyses ATP + H2O + cellular proteinSide 1 = ADP + phosphate + cellular proteinSide 2.. Its function is as follows. Part of the Sec protein translocase complex. Interacts with the SecYEG preprotein conducting channel. Has a central role in coupling the hydrolysis of ATP to the transfer of proteins into and across the cell membrane, serving both as a receptor for the preprotein-SecB complex and as an ATP-driven molecular motor driving the stepwise translocation of polypeptide chains across the membrane. In Ehrlichia chaffeensis (strain ATCC CRL-10679 / Arkansas), this protein is Protein translocase subunit SecA.